The chain runs to 419 residues: D-inositol 3-phosphate glycosyltransferase (419 aa).

H9 contributes to the 1D-myo-inositol 3-phosphate binding site. UDP-N-acetyl-alpha-D-glucosamine-binding positions include Q15–P16 and G23. 1D-myo-inositol 3-phosphate is bound by residues D20–N25, K78, Y110, T134, and R154. UDP-N-acetyl-alpha-D-glucosamine contacts are provided by R231, K236, and R295. Mg(2+) contacts are provided by Y304, R305, and A307. UDP-N-acetyl-alpha-D-glucosamine contacts are provided by E317 and E325. Residue T331 participates in Mg(2+) binding.

It belongs to the glycosyltransferase group 1 family. MshA subfamily. In terms of assembly, homodimer.

The catalysed reaction is 1D-myo-inositol 3-phosphate + UDP-N-acetyl-alpha-D-glucosamine = 1D-myo-inositol 2-acetamido-2-deoxy-alpha-D-glucopyranoside 3-phosphate + UDP + H(+). In terms of biological role, catalyzes the transfer of a N-acetyl-glucosamine moiety to 1D-myo-inositol 3-phosphate to produce 1D-myo-inositol 2-acetamido-2-deoxy-glucopyranoside 3-phosphate in the mycothiol biosynthesis pathway. This Corynebacterium jeikeium (strain K411) protein is D-inositol 3-phosphate glycosyltransferase.